Consider the following 507-residue polypeptide: MVTIRADEISDIIRERIEQYNREVKILNTGTVLQVGDGIARIYGLDEVMAGELVEFEEGTIGIALNLESNNVGVVLMGDGLMIQEGSSVKATGRIAQIPVSEAFLGRVINALAKPIDGRGEISASESRLIESPAPGIISRRSVYEPLQTGLIAIDSMIPIGRGQRELIIGDRQTGKTAVATDTILNQQGQNVICVYVAIGQKASSVAQVVTTLQERGAMEYTIVVAETADSPATLQYLAPYTGATLAEYFMYREQHTSIIYDDPSKQAQAYRQMSLLLRRPPGREAYPGDVFYLHSRLLERAAKSSSRLGEGSMTALPIVETQSGDVSAYIPTNVISITDGQIFLSADLFNAGIRPAINVGISVSRVGSAAQIKAMKQVAGKLKLELAQFAELEAFAQFASDLDKATQNQLARGQRLRELLKQSQSAPLAVEEQIITIYTGTNGYLDSLEIGQVRKFLVELRTYLKTNKPQFQEIISSTKTFTKEAEALLKEAIQEQMERFLLQEQV.

170–177 is an ATP binding site; it reads GDRQTGKT.

Belongs to the ATPase alpha/beta chains family. F-type ATPases have 2 components, CF(1) - the catalytic core - and CF(0) - the membrane proton channel. CF(1) has five subunits: alpha(3), beta(3), gamma(1), delta(1), epsilon(1). CF(0) has four main subunits: a, b, b' and c.

It is found in the plastid. The protein resides in the chloroplast thylakoid membrane. The enzyme catalyses ATP + H2O + 4 H(+)(in) = ADP + phosphate + 5 H(+)(out). In terms of biological role, produces ATP from ADP in the presence of a proton gradient across the membrane. The alpha chain is a regulatory subunit. The polypeptide is ATP synthase subunit alpha, chloroplastic (Morus indica (Mulberry)).